A 191-amino-acid polypeptide reads, in one-letter code: Cytochrome c oxidase assembly protein CtaG (191 aa).

Residues methionine 1–threonine 9 lie on the Cytoplasmic side of the membrane. Residues alanine 10–phenylalanine 30 form a helical; Signal-anchor for type II membrane protein membrane-spanning segment. At tyrosine 31 to asparagine 191 the chain is on the periplasmic side.

Belongs to the COX11/CtaG family.

It is found in the cell inner membrane. Exerts its effect at some terminal stage of cytochrome c oxidase synthesis, probably by being involved in the insertion of the copper B into subunit I. In Cereibacter sphaeroides (strain ATCC 17023 / DSM 158 / JCM 6121 / CCUG 31486 / LMG 2827 / NBRC 12203 / NCIMB 8253 / ATH 2.4.1.) (Rhodobacter sphaeroides), this protein is Cytochrome c oxidase assembly protein CtaG.